The sequence spans 131 residues: Single-stranded DNA-binding protein 2 (131 aa).

An SSB domain is found at 1-103; it reads MYNKVIMIGR…VLASSFQLLE (103 aa). Residues 126–131 carry the Important for interaction with partner proteins motif; that stretch reads EEELPF.

Homotetramer.

Functionally, plays an important role in DNA replication, recombination and repair. Binds to ssDNA and to an array of partner proteins to recruit them to their sites of action during DNA metabolism. The sequence is that of Single-stranded DNA-binding protein 2 (ssb2) from Streptococcus agalactiae serotype V (strain ATCC BAA-611 / 2603 V/R).